The chain runs to 375 residues: Phosphoribulokinase, chloroplastic (375 aa).

The N-terminal 31 residues, Met1–Ala31, are a transit peptide targeting the chloroplast. Cys47 and Cys86 are disulfide-bonded.

This sequence belongs to the phosphoribulokinase family. In terms of assembly, component of a complex that contains two dimers of PRK, two tetramers of GAPDH and CP12.

It is found in the plastid. It localises to the chloroplast. The catalysed reaction is D-ribulose 5-phosphate + ATP = D-ribulose 1,5-bisphosphate + ADP + H(+). It functions in the pathway carbohydrate biosynthesis; Calvin cycle. Its activity is regulated as follows. Light regulated via thioredoxin by reversible oxidation/reduction of sulfhydryl/disulfide groups. The polypeptide is Phosphoribulokinase, chloroplastic (PRKA) (Chlamydomonas reinhardtii (Chlamydomonas smithii)).